The primary structure comprises 331 residues: MNAPQTNDTAADVATIEASAAEVGRRALTRREQKEAYEDNKLFKRIVRQVGQAIGDYNMIEDGDKVMVCLSGGKDSYAMLDILLRLRERAPIDFDIVAVNLDQKQPGFPEHVLPEYLTQIGVPFHIENQDTYSIVKRLVPEGKTTCSLCSRLRRGILYRVAGELGATKIALGHHRDDIVQTLLLNMFYGGKLKGMPPKLQSDDGKNVVIRPLAYVKETDLEKYAELREFPIIPCNLCGSQPNLKRAEMKALIREWDKRFPGRVDNMFNALANVVPSHLMDTTLFPFASLRATGQADPQGDIAFDEEPCASGDETAAPGGAKPISIVQFDDL.

Positions 71–76 (SGGKDS) match the PP-loop motif motif. [4Fe-4S] cluster is bound by residues Cys146, Cys149, and Cys237.

The protein belongs to the TtcA family. Homodimer. Requires Mg(2+) as cofactor. It depends on [4Fe-4S] cluster as a cofactor.

Its subcellular location is the cytoplasm. It carries out the reaction cytidine(32) in tRNA + S-sulfanyl-L-cysteinyl-[cysteine desulfurase] + AH2 + ATP = 2-thiocytidine(32) in tRNA + L-cysteinyl-[cysteine desulfurase] + A + AMP + diphosphate + H(+). It functions in the pathway tRNA modification. Catalyzes the ATP-dependent 2-thiolation of cytidine in position 32 of tRNA, to form 2-thiocytidine (s(2)C32). The sulfur atoms are provided by the cysteine/cysteine desulfurase (IscS) system. This is tRNA-cytidine(32) 2-sulfurtransferase from Burkholderia multivorans (strain ATCC 17616 / 249).